We begin with the raw amino-acid sequence, 452 residues long: MPVDLDNSSTVSGEASVSISSTGNQNPLPNSTGKKKRNLPGMPDPESEVIALSPKTLLATNRFVCEICNKGFQRDQNLQLHRRGHNLPWKLRQKSNKEVKKKVYVCPEVSCVHHDPSRALGDLTGIKKHFCRKHGEKKWKCDKCSKKYAVQSDWKAHSKICGTKEYKCDCGTLFSRRDSFITHRAFCDALAEENARSHHSQSKKQNPEILTRKNPVPNPVPAPVDTESAKIKSSSTLTIKQSESPKTPPEIVQEAPKPTSLNVVTSNGVFAGLFESSSASPSIYTTSSSSKSLFASSSSIEPISLGLSTSHGSSFLGSNRFHAQPAMSATALLQKAAQMGAASSGGSLLHGLGIVSSTSTSIDAIVPHGLGLGLPCGGESSSGLKELMMGNSSVFGPKQTTLDFLGLGRAVGNGNGPSNGLSTLVGGGTGIDMATTFGSGEFSGKDISRRKS.

The segment covering 1-32 (MPVDLDNSSTVSGEASVSISSTGNQNPLPNST) has biased composition (polar residues). The interval 1 to 47 (MPVDLDNSSTVSGEASVSISSTGNQNPLPNSTGKKKRNLPGMPDPES) is disordered. Ser53 bears the Phosphoserine mark. C2H2-type zinc fingers lie at residues 63 to 85 (FVCE…RRGH) and 104 to 134 (YVCP…CRKH). A Nuclear localization signal motif is present at residues 126 to 133 (IKKHFCRK). A C2H2-type 2; degenerate zinc finger spans residues 139–162 (WKCDKCSKKYAVQSDWKAHSKICG). Zn(2+) contacts are provided by Cys141, Cys144, His157, Cys161, Cys168, Cys170, His183, and Cys187. The CCHC-type 2; atypical zinc finger occupies 166-189 (YKCDCGTLFSRRDSFITHRAFCDA). Residues 176–188 (RRDSFITHRAFCD) are SHR-binding. Residues 196–254 (RSHHSQSKKQNPEILTRKNPVPNPVPAPVDTESAKIKSSSTLTIKQSESPKTPPEIVQE) are disordered. The segment covering 231–245 (IKSSSTLTIKQSESP) has biased composition (polar residues).

Interacts with the DELLA proteins (e.g. GAI/RGA2, RGA, RGL1, RGL2 and RGLG3), acting as coactivators and with TPR1 and TPR4, acting as a corepressors, at the promoter of GA20OX2 gene. Observed in vegetative tissues. Mainly expressed in hypocotyls, petioles, shoot apices, root tips, and trichomes, and, at low levels, in leaves, stems and flowers.

The protein resides in the nucleus. Transcription activation is repressed by gibberellic acid GA(3) in the presence of TPR4. Functionally, transcription factor that acts as a positive regulator of gibberellin (GA) action, homeostasis and signaling. GA converts the GAF1 complex from transcriptional activator to repressor via the degradation of DELLA proteins. In Arabidopsis thaliana (Mouse-ear cress), this protein is Zinc finger protein GAI-ASSOCIATED FACTOR 1.